The chain runs to 482 residues: tRNA sulfurtransferase (482 aa).

Residues 61–165 (LAIRDALTRI…DDRLLLIKGR (105 aa)) form the THUMP domain. ATP contacts are provided by residues 183–184 (LI), Lys265, Gly287, and Gln296. Cys344 and Cys456 are disulfide-bonded. The Rhodanese domain occupies 404–482 (FGPNDVILDI…GFNNVKVYRP (79 aa)). Cys456 functions as the Cysteine persulfide intermediate in the catalytic mechanism.

Belongs to the ThiI family.

The protein localises to the cytoplasm. The catalysed reaction is [ThiI sulfur-carrier protein]-S-sulfanyl-L-cysteine + a uridine in tRNA + 2 reduced [2Fe-2S]-[ferredoxin] + ATP + H(+) = [ThiI sulfur-carrier protein]-L-cysteine + a 4-thiouridine in tRNA + 2 oxidized [2Fe-2S]-[ferredoxin] + AMP + diphosphate. The enzyme catalyses [ThiS sulfur-carrier protein]-C-terminal Gly-Gly-AMP + S-sulfanyl-L-cysteinyl-[cysteine desulfurase] + AH2 = [ThiS sulfur-carrier protein]-C-terminal-Gly-aminoethanethioate + L-cysteinyl-[cysteine desulfurase] + A + AMP + 2 H(+). Its pathway is cofactor biosynthesis; thiamine diphosphate biosynthesis. Functionally, catalyzes the ATP-dependent transfer of a sulfur to tRNA to produce 4-thiouridine in position 8 of tRNAs, which functions as a near-UV photosensor. Also catalyzes the transfer of sulfur to the sulfur carrier protein ThiS, forming ThiS-thiocarboxylate. This is a step in the synthesis of thiazole, in the thiamine biosynthesis pathway. The sulfur is donated as persulfide by IscS. In Escherichia coli (strain 55989 / EAEC), this protein is tRNA sulfurtransferase.